Consider the following 570-residue polypeptide: Sulfite reductase [NADPH] hemoprotein beta-component (570 aa).

Positions 434, 440, 479, and 483 each coordinate [4Fe-4S] cluster. Position 483 (Cys-483) interacts with siroheme.

The protein belongs to the nitrite and sulfite reductase 4Fe-4S domain family. In terms of assembly, alpha(8)-beta(8). The alpha component is a flavoprotein, the beta component is a hemoprotein. The cofactor is siroheme. [4Fe-4S] cluster is required as a cofactor.

The catalysed reaction is hydrogen sulfide + 3 NADP(+) + 3 H2O = sulfite + 3 NADPH + 4 H(+). Its pathway is sulfur metabolism; hydrogen sulfide biosynthesis; hydrogen sulfide from sulfite (NADPH route): step 1/1. In terms of biological role, component of the sulfite reductase complex that catalyzes the 6-electron reduction of sulfite to sulfide. This is one of several activities required for the biosynthesis of L-cysteine from sulfate. The protein is Sulfite reductase [NADPH] hemoprotein beta-component of Escherichia coli O1:K1 / APEC.